The chain runs to 469 residues: Putative diacyglycerol O-acyltransferase MT0231 (469 aa).

Catalysis depends on H139, which acts as the Proton acceptor.

Belongs to the long-chain O-acyltransferase family.

The enzyme catalyses an acyl-CoA + a 1,2-diacyl-sn-glycerol = a triacyl-sn-glycerol + CoA. The protein operates within glycerolipid metabolism; triacylglycerol biosynthesis. This chain is Putative diacyglycerol O-acyltransferase MT0231, found in Mycobacterium tuberculosis (strain CDC 1551 / Oshkosh).